Here is a 315-residue protein sequence, read N- to C-terminus: Small ribosomal subunit biogenesis GTPase RsgA (315 aa).

The region spanning 80–241 (LSKQTHIIAS…IIDTPGIKGF (162 aa)) is the CP-type G domain. Residues 129 to 132 (NKVD) and 183 to 191 (GHSGTGKST) contribute to the GTP site. 4 residues coordinate Zn(2+): Cys265, Cys270, His272, and Cys278.

Belongs to the TRAFAC class YlqF/YawG GTPase family. RsgA subfamily. As to quaternary structure, monomer. Associates with 30S ribosomal subunit, binds 16S rRNA. The cofactor is Zn(2+).

It localises to the cytoplasm. One of several proteins that assist in the late maturation steps of the functional core of the 30S ribosomal subunit. Helps release RbfA from mature subunits. May play a role in the assembly of ribosomal proteins into the subunit. Circularly permuted GTPase that catalyzes slow GTP hydrolysis, GTPase activity is stimulated by the 30S ribosomal subunit. This is Small ribosomal subunit biogenesis GTPase RsgA from Christiangramia forsetii (strain DSM 17595 / CGMCC 1.15422 / KT0803) (Gramella forsetii).